Reading from the N-terminus, the 304-residue chain is MSYRGLTILGCSSQQPTRHRNHGAYLLRWNGEGLLFDPGEGTQRQFIYANIAPTVVSRIFISHFHGDHCLGLGSMLMRLNLDKVSHPIHCYYPASGKKYFDRLRYSTIYHETIKVVEHPISSEGIVEDFGNFRIEARQLDHLVDTLGWRITEPDTTKFISEKIKAAGLKGPIMQELINKGIIKVNNNIIRLEDVSYTRKGDSIAVVADSLPCQAIVDLAKNARILLCESTYLEEHAHLAKNHYHMTAKQAAEQAKRAEAQQLILTHFSARYNTTEQFVQEAGEIFPNVFAAEEFCSYEFPKNAN.

The Zn(2+) site is built by His-63, His-65, Asp-67, His-68, His-141, Asp-208, and His-266. Asp-67 functions as the Proton acceptor in the catalytic mechanism.

This sequence belongs to the RNase Z family. As to quaternary structure, homodimer. Requires Zn(2+) as cofactor.

The catalysed reaction is Endonucleolytic cleavage of RNA, removing extra 3' nucleotides from tRNA precursor, generating 3' termini of tRNAs. A 3'-hydroxy group is left at the tRNA terminus and a 5'-phosphoryl group is left at the trailer molecule.. In terms of biological role, zinc phosphodiesterase, which displays some tRNA 3'-processing endonuclease activity. Probably involved in tRNA maturation, by removing a 3'-trailer from precursor tRNA. The chain is Ribonuclease Z from Chlamydia muridarum (strain MoPn / Nigg).